Consider the following 91-residue polypeptide: Small ribosomal subunit protein bS20 (91 aa).

Belongs to the bacterial ribosomal protein bS20 family.

Binds directly to 16S ribosomal RNA. This is Small ribosomal subunit protein bS20 from Caulobacter sp. (strain K31).